A 265-amino-acid polypeptide reads, in one-letter code: Ribosomal RNA small subunit methyltransferase A (265 aa).

The S-adenosyl-L-methionine site is built by H17, L19, G44, E65, D90, and N112.

The protein belongs to the class I-like SAM-binding methyltransferase superfamily. rRNA adenine N(6)-methyltransferase family. RsmA subfamily.

Its subcellular location is the cytoplasm. It catalyses the reaction adenosine(1518)/adenosine(1519) in 16S rRNA + 4 S-adenosyl-L-methionine = N(6)-dimethyladenosine(1518)/N(6)-dimethyladenosine(1519) in 16S rRNA + 4 S-adenosyl-L-homocysteine + 4 H(+). In terms of biological role, specifically dimethylates two adjacent adenosines (A1518 and A1519) in the loop of a conserved hairpin near the 3'-end of 16S rRNA in the 30S particle. May play a critical role in biogenesis of 30S subunits. This chain is Ribosomal RNA small subunit methyltransferase A, found in Xylella fastidiosa (strain 9a5c).